A 196-amino-acid polypeptide reads, in one-letter code: RNA pyrophosphohydrolase (196 aa).

In terms of domain architecture, Nudix hydrolase spans 6–149 (GYRPNVGIVI…KRDVYRKVMK (144 aa)). Positions 38–59 (GGINDNESAEQAMYRELHEEVG) match the Nudix box motif. Positions 166–196 (SREANSQSNSANKKYSQTKYTKRHFYKSKGQ) are disordered. Residues 167 to 184 (REANSQSNSANKKYSQTK) are compositionally biased toward polar residues. Residues 185 to 196 (YTKRHFYKSKGQ) are compositionally biased toward basic residues.

The protein belongs to the Nudix hydrolase family. RppH subfamily. It depends on a divalent metal cation as a cofactor.

In terms of biological role, accelerates the degradation of transcripts by removing pyrophosphate from the 5'-end of triphosphorylated RNA, leading to a more labile monophosphorylated state that can stimulate subsequent ribonuclease cleavage. The polypeptide is RNA pyrophosphohydrolase (Haemophilus influenzae (strain 86-028NP)).